A 160-amino-acid chain; its full sequence is MQPASAKWYDRRDYVFIEFCVEDSKDVNVNFEKSKLTFSCLGGSDNFKHLNEIDLFHCIDPNDSKHKRTDRSILCCLRKGESGQSWPRLTKERAKLNWLSVDFNNWKDWEDDSDEDMSNFDRFSEMMDHMGGDEDVDLPEVDGADDDSQDSDDEKMPDLE.

The 90-residue stretch at 1–90 folds into the CS domain; it reads MQPASAKWYD…ESGQSWPRLT (90 aa). At lysine 33 the chain carries N6-acetyllysine. Residue lysine 35 forms a Glycyl lysine isopeptide (Lys-Gly) (interchain with G-Cter in SUMO2) linkage. At serine 44 the chain carries Phosphoserine. Lysine 65 is covalently cross-linked (Glycyl lysine isopeptide (Lys-Gly) (interchain with G-Cter in SUMO2)). Residues serine 85, serine 100, serine 113, and serine 118 each carry the phosphoserine modification. A disordered region spans residues 118 to 160; the sequence is SNFDRFSEMMDHMGGDEDVDLPEVDGADDDSQDSDDEKMPDLE. The span at 122-132 shows a compositional bias: basic and acidic residues; it reads RFSEMMDHMGG. The span at 133-153 shows a compositional bias: acidic residues; it reads DEDVDLPEVDGADDDSQDSDD. Serine 148 and serine 151 each carry phosphoserine. The PXLE motif signature appears at 157 to 160; the sequence is PDLE.

Belongs to the p23/wos2 family. Probably forms a complex composed of chaperones HSP90 and HSP70, co-chaperones STIP1/HOP, CDC37, PPP5C, PTGES3/p23, TSC1 and client protein TSC2. Binds to the progesterone receptor. Interacts with TERT; the interaction, together with HSP90AA1, is required for correct assembly and stabilization of the telomerase holoenzyme complex. Interacts (via PXLE motif) with EGLN1/PHD2, recruiting EGLN1/PHD2 to the HSP90 pathway to facilitate HIF alpha proteins hydroxylation. Interacts with HSP90AA1, FLCN, FNIP1 and FNIP2. Proteolytically cleaved by caspase-7 (CASP7) in response to apoptosis, leading to its inactivation. As to expression, expressed in testis, kidney, bladder and ovary.

Its subcellular location is the cytoplasm. It carries out the reaction prostaglandin H2 = prostaglandin E2. The protein operates within lipid metabolism; prostaglandin biosynthesis. Functionally, cytosolic prostaglandin synthase that catalyzes the oxidoreduction of prostaglandin endoperoxide H2 (PGH2) to prostaglandin E2 (PGE2). Molecular chaperone that localizes to genomic response elements in a hormone-dependent manner and disrupts receptor-mediated transcriptional activation, by promoting disassembly of transcriptional regulatory complexes. Facilitates HIF alpha proteins hydroxylation via interaction with EGLN1/PHD2, leading to recruit EGLN1/PHD2 to the HSP90 pathway. The sequence is that of Prostaglandin E synthase 3 (Ptges3) from Mus musculus (Mouse).